The chain runs to 350 residues: C-X-C chemokine receptor type 1 (350 aa).

Residues 1–39 are Extracellular-facing; the sequence is MSNITDPQMWDFDDLNFTGMPPTDEGYSPCRLETETLNK. 2 N-linked (GlcNAc...) asparagine glycosylation sites follow: Asn-3 and Asn-16. A helical transmembrane segment spans residues 40–66; it reads YVVIITYALVFLLSLLGNSLVMLVILY. Residues 67 to 75 are Cytoplasmic-facing; sequence SRVGRSVTD. A helical membrane pass occupies residues 76–96; it reads VYLLNLALADLLFALTLPIWA. Residues 97–111 lie on the Extracellular side of the membrane; that stretch reads ASKVNGWIFGTFLCK. A disulfide bridge links Cys-110 with Cys-187. The chain crosses the membrane as a helical span at residues 112-133; it reads VVSLLKEVNFYSGILLLACISV. Topologically, residues 134 to 154 are cytoplasmic; that stretch reads DRYLAIVHATRTLTQKRHLVK. Residues 155-174 form a helical membrane-spanning segment; sequence FVCLGCWGLSMNLSLPFFLF. The Extracellular portion of the chain corresponds to 175-199; the sequence is RQAYHPNNSSPVCYEVLGNDTAKWR. Residues 200–220 form a helical membrane-spanning segment; sequence MVLRILPHTFGFIVPLFVMLF. At 221-242 the chain is on the cytoplasmic side; the sequence is CYGFTLRTLFKAHMGQKHRAMR. A helical transmembrane segment spans residues 243-264; sequence VIFAVVLIFLLCWLPYNLVLLA. The Extracellular portion of the chain corresponds to 265 to 285; it reads DTLMRTQVIQESCERRNNIGR. A helical transmembrane segment spans residues 286–308; sequence ALDATEILGFLHSCLNPIIYAFI. Over 309-350 the chain is Cytoplasmic; it reads GQNFRHGFLKILAMHGLVSKEFLARHRVTSYTSSSVNVSSNL.

It belongs to the G-protein coupled receptor 1 family. As to quaternary structure, interacts with IL8. Interacts with GNAI2.

It localises to the cell membrane. Its function is as follows. Receptor to interleukin-8, which is a powerful neutrophils chemotactic factor. Binding of IL-8 to the receptor causes activation of neutrophils. This response is mediated via a G-protein that activates a phosphatidylinositol-calcium second messenger system. This chain is C-X-C chemokine receptor type 1 (CXCR1), found in Pan troglodytes (Chimpanzee).